The primary structure comprises 858 residues: Chitin synthase 2 (858 aa).

A compositionally biased stretch (basic and acidic residues) spans 1–12; that stretch reads MYPEGPKPEHDQ. A disordered region spans residues 1–116; the sequence is MYPEGPKPEH…GQAPRRQPRR (116 aa). Residues 15-24 show a composition bias toward polar residues; it reads LQDTQFSNQP. Pro residues-rich tracts occupy residues 52–68 and 76–89; these read AYPP…PNFP and PYPP…PVSP. The next 7 helical transmembrane spans lie at 500–517, 540–560, 586–606, 621–641, 665–685, 799–819, and 825–845; these read RWLN…YHWR, TYNL…FFIL, LHTV…IMAL, MVFF…ITVV, NIII…FMFL, VLAW…TTVI, and ASIY…IRFT.

This sequence belongs to the chitin synthase family.

It is found in the cell membrane. It catalyses the reaction [(1-&gt;4)-N-acetyl-beta-D-glucosaminyl](n) + UDP-N-acetyl-alpha-D-glucosamine = [(1-&gt;4)-N-acetyl-beta-D-glucosaminyl](n+1) + UDP + H(+). In terms of biological role, polymerizes chitin, a structural polymer of the cell wall and septum, by transferring the sugar moiety of UDP-GlcNAc to the non-reducing end of the growing chitin polymer. The polypeptide is Chitin synthase 2 (CHS2) (Rhizopus oligosporus (Rhizopus microsporus var. oligosporus)).